Reading from the N-terminus, the 302-residue chain is 4-hydroxy-tetrahydrodipicolinate synthase (302 aa).

Thr-56 provides a ligand contact to pyruvate. Tyr-145 acts as the Proton donor/acceptor in catalysis. Lys-173 functions as the Schiff-base intermediate with substrate in the catalytic mechanism. Val-215 serves as a coordination point for pyruvate.

It belongs to the DapA family. Homotetramer; dimer of dimers.

Its subcellular location is the cytoplasm. The catalysed reaction is L-aspartate 4-semialdehyde + pyruvate = (2S,4S)-4-hydroxy-2,3,4,5-tetrahydrodipicolinate + H2O + H(+). The protein operates within amino-acid biosynthesis; L-lysine biosynthesis via DAP pathway; (S)-tetrahydrodipicolinate from L-aspartate: step 3/4. Its function is as follows. Catalyzes the condensation of (S)-aspartate-beta-semialdehyde [(S)-ASA] and pyruvate to 4-hydroxy-tetrahydrodipicolinate (HTPA). The chain is 4-hydroxy-tetrahydrodipicolinate synthase from Prochlorococcus marinus (strain MIT 9515).